We begin with the raw amino-acid sequence, 621 residues long: uncharacterized protein (621 aa).

3 consecutive transmembrane segments (helical) span residues 240 to 260 (FFDAFFVILLLICHLNNNLLW), 548 to 568 (LGIVTAVVFGIIEFFNCVWTV), and 587 to 607 (VIIGIGTILVLTLLITILTFM).

It localises to the cell membrane. This is an uncharacterized protein from Mycoplasma pneumoniae (strain ATCC 29342 / M129 / Subtype 1) (Mycoplasmoides pneumoniae).